Here is a 256-residue protein sequence, read N- to C-terminus: Dihydroorotate dehydrogenase B (NAD(+)), electron transfer subunit (256 aa).

The region spanning 2–100 (IRLETMKVVA…MGPQGNGFDL (99 aa)) is the FAD-binding FR-type domain. FAD is bound by residues 51–54 (RPIS), 68–70 (IYR), and 75–76 (GT). [2Fe-2S] cluster is bound by residues cysteine 220, cysteine 225, cysteine 228, and cysteine 243.

This sequence belongs to the PyrK family. Heterotetramer of 2 PyrK and 2 PyrD type B subunits. [2Fe-2S] cluster serves as cofactor. FAD is required as a cofactor.

The protein operates within pyrimidine metabolism; UMP biosynthesis via de novo pathway; orotate from (S)-dihydroorotate (NAD(+) route): step 1/1. Responsible for channeling the electrons from the oxidation of dihydroorotate from the FMN redox center in the PyrD type B subunit to the ultimate electron acceptor NAD(+). The sequence is that of Dihydroorotate dehydrogenase B (NAD(+)), electron transfer subunit from Streptococcus pneumoniae (strain ATCC BAA-255 / R6).